The chain runs to 176 residues: MWRRIVSSQLKTLAADVVAASPRRSIAATTRPVGFYLAANRSAISASSFVIPRRFSSDSVETPATKKVEDVMPIATGHEKEELEAELEGRRLDDIDFPEGPFGTKEAPAIVKSYYDKRIVGCPGGEGEDEHDVVWFWLEKGKSFECPVCTQYFELEVVGPGGPPDGHGDEDDEHHH.

Residues 1–55 constitute a mitochondrion transit peptide; that stretch reads MWRRIVSSQLKTLAADVVAASPRRSIAATTRPVGFYLAANRSAISASSFVIPRRF. Residues C122, C146, and C149 each contribute to the Zn(2+) site. The disordered stretch occupies residues 157–176; sequence VVGPGGPPDGHGDEDDEHHH.

It belongs to the cytochrome c oxidase subunit 5B (TC 3.D.4.11) family.

It localises to the mitochondrion inner membrane. Functionally, this protein is one of the nuclear-coded polypeptide chains of cytochrome c oxidase, the terminal oxidase in mitochondrial electron transport. This Arabidopsis thaliana (Mouse-ear cress) protein is Cytochrome c oxidase subunit 5b-1, mitochondrial (COX5B-1).